Here is a 233-residue protein sequence, read N- to C-terminus: Transcriptional regulatory protein PrrA (233 aa).

The 115-residue stretch at 9–123 folds into the Response regulatory domain; sequence RVLVVDDDSD…ELVARVKALL (115 aa). Position 58 is a 4-aspartylphosphate (Asp58). The segment at residues 134–232 is a DNA-binding region (ompR/PhoB-type); it reads SETIAVGPLE…VRGVGFVLRM (99 aa).

Post-translationally, phosphorylated by PrrB at Asp-58.

It is found in the cytoplasm. Functionally, member of the two-component regulatory system PrrB/PrrA that is involved specifically in early intracellular multiplication of Mycobacterium and is essential for its viability. Upon phosphorylation by PrrB, functions as a transcription regulator by direct binding to promoter regions of target genes to positively regulate their expression. Autoregulates its own expression. This chain is Transcriptional regulatory protein PrrA (prrA), found in Mycobacterium leprae (strain TN).